Reading from the N-terminus, the 557-residue chain is Probable serine/threonine-protein kinase WNK7 (557 aa).

A Protein kinase domain is found at 28–285 (IRYKEVIGKG…AEELLLDSFL (258 aa)). ATP-binding positions include 108–111 (TELF) and K158. D175 acts as the Proton acceptor in catalysis. Polar residues predominate over residues 451 to 477 (QNQSSKDNHQNGASSQAGESISHSLSS). The disordered stretch occupies residues 451–517 (QNQSSKDNHQ…EEEEDERLKE (67 aa)). S505 carries the post-translational modification Phosphoserine.

This sequence belongs to the protein kinase superfamily. Ser/Thr protein kinase family. WNK subfamily.

It catalyses the reaction L-seryl-[protein] + ATP = O-phospho-L-seryl-[protein] + ADP + H(+). The catalysed reaction is L-threonyl-[protein] + ATP = O-phospho-L-threonyl-[protein] + ADP + H(+). May regulate flowering time by modulating the photoperiod pathway. The protein is Probable serine/threonine-protein kinase WNK7 (WNK7) of Arabidopsis thaliana (Mouse-ear cress).